The chain runs to 148 residues: UPF0178 protein EF_0842 (148 aa).

Belongs to the UPF0178 family.

This is UPF0178 protein EF_0842 from Enterococcus faecalis (strain ATCC 700802 / V583).